Consider the following 335-residue polypeptide: MAAATAPKTMPSSVFAAALLLLAAAACQASPYYPLELGYYRYTCPQAEAIVKASMEKAIAQNPGNGAAVIRMLFHDCFVEGCDASVLLDPTPFSPTPEKLAAPNNPSLRGFELIDAIKDALEAACPGVVSCADIIAFAARDASCFLSQGKVSFDMPSGRLDGTFSNASESVKFLVPPTSNLSDLASSFAVKGMSLEDLVVLSGAHTVGRSHCSSFVSDRLDVPSDINPALAAFLRTRCPPNTTTSDDPTVMQDVVTPNAMDIQYYKNVLSHTVLFTSDAALLTSPETAKLVLDNAKIPGWWEDKFEKAMVKMASLEVKTGHQGQVRKNCRAINHY.

A signal peptide spans 1–29 (MAAATAPKTMPSSVFAAALLLLAAAACQA). 4 cysteine pairs are disulfide-bonded: C44/C125, C77/C82, C131/C329, and C212/C238. The active-site Proton acceptor is the H75. Positions 76, 79, 81, 83, and 85 each coordinate Ca(2+). 2 N-linked (GlcNAc...) asparagine glycosylation sites follow: N166 and N180. H205 provides a ligand contact to heme b. T206 provides a ligand contact to Ca(2+). An N-linked (GlcNAc...) asparagine glycan is attached at N241. Positions 253, 256, and 261 each coordinate Ca(2+).

It belongs to the peroxidase family. Classical plant (class III) peroxidase subfamily. The cofactor is heme b. Requires Ca(2+) as cofactor. Expressed in the elongating region of young roots, and in root vascular tissues and epidermis.

The protein resides in the secreted. The catalysed reaction is 2 a phenolic donor + H2O2 = 2 a phenolic radical donor + 2 H2O. Functionally, removal of H(2)O(2), oxidation of toxic reductants, biosynthesis and degradation of lignin, suberization, auxin catabolism, response to environmental stresses such as wounding, pathogen attack and oxidative stress. These functions might be dependent on each isozyme/isoform in each plant tissue. The protein is Peroxidase 2 (PER2) of Zea mays (Maize).